A 29-amino-acid chain; its full sequence is Cytochrome b6-f complex subunit 8 (29 aa).

A helical membrane pass occupies residues 3-23 (ITSIAWGALMVVFTFSLSLVV).

The protein belongs to the PetN family. The 4 large subunits of the cytochrome b6-f complex are cytochrome b6, subunit IV (17 kDa polypeptide, PetD), cytochrome f and the Rieske protein, while the 4 small subunits are PetG, PetL, PetM and PetN. The complex functions as a dimer.

Its subcellular location is the plastid membrane. Component of the cytochrome b6-f complex, which mediates electron transfer between photosystem II (PSII) and photosystem I (PSI), cyclic electron flow around PSI, and state transitions. This Aneura mirabilis (Parasitic liverwort) protein is Cytochrome b6-f complex subunit 8.